The following is a 993-amino-acid chain: uncharacterized protein (993 aa).

The signal sequence occupies residues 1-28; that stretch reads MKLFPRSILITLVLSFALNLGIVTKIHA. Helical transmembrane passes span 331–351, 359–379, 392–412, 494–514, 521–541, 554–574, and 699–719; these read IVTA…LLAG, YINF…INIT, MIQW…SWVM, MLVS…AFMV, MISI…FLFA, MISF…MFSV, and IKNI…MYNF. The segment at 779–904 is disordered; that stretch reads GQGGGASDLE…EKVDSTSKGT (126 aa). Residues 805–829 are compositionally biased toward low complexity; the sequence is TSAPAVTTPTASSSVASSSPKTVSS. Pro residues predominate over residues 838 to 850; the sequence is PPAPTEAVSPPPA. Residues 866 to 879 are compositionally biased toward basic and acidic residues; it reads IIRDNNQESKKEID.

This sequence belongs to the TrbL/VirB6 family.

It localises to the cell membrane. This is an uncharacterized protein from Rickettsia conorii (strain ATCC VR-613 / Malish 7).